The sequence spans 138 residues: Acidic phospholipase A2 inhibitor vaspin A chain (138 aa).

The first 16 residues, Met1–Gly16, serve as a signal peptide directing secretion. 7 disulfide bridges follow: Cys42-Cys131, Cys44-Cys60, Cys59-Cys111, Cys65-Cys138, Cys66-Cys104, Cys73-Cys97, and Cys91-Cys102.

The protein belongs to the phospholipase A2 family. Group II subfamily. D49 sub-subfamily. In terms of assembly, heterodimer of a toxic basic protein having phospholipase A2 activity (B chain (AC Q8JFG0)) and a non-toxic acidic protein functioning as its inhibitor (A chain). Expressed by the venom gland.

It is found in the secreted. Its function is as follows. Heterodimer: postsynaptic neurotoxin. Functionally, monomer: the acidic chain inhibits the basic phospholipase A2 of the complex. This chain is Acidic phospholipase A2 inhibitor vaspin A chain, found in Vipera aspis aspis (Aspic viper).